We begin with the raw amino-acid sequence, 131 residues long: Small ribosomal subunit protein eS24 (131 aa).

At Met-1 the chain carries N-acetylmethionine. The residue at position 9 (Thr-9) is a Phosphothreonine. Lys-37 participates in a covalent cross-link: Glycyl lysine isopeptide (Lys-Gly) (interchain with G-Cter in SUMO2). The span at 90–100 shows a compositional bias: basic and acidic residues; that stretch reads RLARHGLYEKK. Residues 90–131 are disordered; the sequence is RLARHGLYEKKKTSRKQRKERKNRMKKVRGTAKANVGAGKKK. Over residues 101–119 the composition is skewed to basic residues; the sequence is KTSRKQRKERKNRMKKVRG.

It belongs to the eukaryotic ribosomal protein eS24 family. In terms of assembly, component of the small ribosomal subunit. Part of the small subunit (SSU) processome, composed of more than 70 proteins and the RNA chaperone small nucleolar RNA (snoRNA) U3.

It localises to the cytoplasm. It is found in the nucleus. The protein localises to the nucleolus. Functionally, component of the small ribosomal subunit. The ribosome is a large ribonucleoprotein complex responsible for the synthesis of proteins in the cell. Required for processing of pre-rRNA and maturation of 40S ribosomal subunits. Part of the small subunit (SSU) processome, first precursor of the small eukaryotic ribosomal subunit. During the assembly of the SSU processome in the nucleolus, many ribosome biogenesis factors, an RNA chaperone and ribosomal proteins associate with the nascent pre-rRNA and work in concert to generate RNA folding, modifications, rearrangements and cleavage as well as targeted degradation of pre-ribosomal RNA by the RNA exosome. The protein is Small ribosomal subunit protein eS24 (RPS24) of Pongo abelii (Sumatran orangutan).